The primary structure comprises 431 residues: Adenylosuccinate lyase (431 aa).

N(6)-(1,2-dicarboxyethyl)-AMP-binding positions include R4–Y5, R67–D69, and T93–S94. H141 (proton donor/acceptor) is an active-site residue. Position 212 (Q212) interacts with N(6)-(1,2-dicarboxyethyl)-AMP. S262 serves as the catalytic Proton donor/acceptor. Residues S263, K268–N270, N276, and S307–I311 each bind N(6)-(1,2-dicarboxyethyl)-AMP.

It belongs to the lyase 1 family. Adenylosuccinate lyase subfamily. In terms of assembly, homotetramer. Residues from neighboring subunits contribute catalytic and substrate-binding residues to each active site.

The enzyme catalyses N(6)-(1,2-dicarboxyethyl)-AMP = fumarate + AMP. The catalysed reaction is (2S)-2-[5-amino-1-(5-phospho-beta-D-ribosyl)imidazole-4-carboxamido]succinate = 5-amino-1-(5-phospho-beta-D-ribosyl)imidazole-4-carboxamide + fumarate. Its pathway is purine metabolism; AMP biosynthesis via de novo pathway; AMP from IMP: step 2/2. The protein operates within purine metabolism; IMP biosynthesis via de novo pathway; 5-amino-1-(5-phospho-D-ribosyl)imidazole-4-carboxamide from 5-amino-1-(5-phospho-D-ribosyl)imidazole-4-carboxylate: step 2/2. Its function is as follows. Catalyzes two reactions in de novo purine nucleotide biosynthesis. Catalyzes the breakdown of 5-aminoimidazole- (N-succinylocarboxamide) ribotide (SAICAR or 2-[5-amino-1-(5-phospho-beta-D-ribosyl)imidazole-4-carboxamido]succinate) to 5-aminoimidazole-4-carboxamide ribotide (AICAR or 5-amino-1-(5-phospho-beta-D-ribosyl)imidazole-4-carboxamide) and fumarate, and of adenylosuccinate (ADS or N(6)-(1,2-dicarboxyethyl)-AMP) to adenosine monophosphate (AMP) and fumarate. Influences the affinity of glutamyl--tRNA ligase for its substrates and increases its thermostability. This is Adenylosuccinate lyase (purB) from Bacillus subtilis (strain 168).